A 471-amino-acid polypeptide reads, in one-letter code: Tryptophanase (471 aa).

Lysine 5, lysine 115, and lysine 156 each carry N6-acetyllysine. Lysine 270 carries the post-translational modification N6-(pyridoxal phosphate)lysine. Lysine 450 is modified (N6-acetyllysine).

Belongs to the beta-eliminating lyase family. Homotetramer. It depends on pyridoxal 5'-phosphate as a cofactor.

The catalysed reaction is L-tryptophan + H2O = indole + pyruvate + NH4(+). It participates in amino-acid degradation; L-tryptophan degradation via pyruvate pathway; indole and pyruvate from L-tryptophan: step 1/1. The chain is Tryptophanase from Escherichia coli O6:H1 (strain CFT073 / ATCC 700928 / UPEC).